The following is a 465-amino-acid chain: Dihydrolipoyllysine-residue acetyltransferase component 5 of pyruvate dehydrogenase complex, chloroplastic (465 aa).

The transit peptide at 1–31 (MSRLLQTPFLPSVSLPTKTRSSVTGFRVKPR) directs the protein to the chloroplast. The 76-residue stretch at 39 to 114 (IREIFMPALS…PVGSAIALLA (76 aa)) folds into the Lipoyl-binding domain. An N6-lipoyllysine modification is found at K80. The disordered stretch occupies residues 123–148 (AKAKASGGGGGGDSKAPPASPPTAAV). Residues 136-148 (SKAPPASPPTAAV) are compositionally biased toward low complexity. Residues 184–221 (VASPYAKKLAKELKVELAGLVGSGPMGRIVAKDVEAVA) enclose the Peripheral subunit-binding (PSBD) domain. Residue H438 is part of the active site.

This sequence belongs to the 2-oxoacid dehydrogenase family. Requires (R)-lipoate as cofactor.

Its subcellular location is the plastid. The protein resides in the chloroplast stroma. It catalyses the reaction N(6)-[(R)-dihydrolipoyl]-L-lysyl-[protein] + acetyl-CoA = N(6)-[(R)-S(8)-acetyldihydrolipoyl]-L-lysyl-[protein] + CoA. The pyruvate dehydrogenase complex catalyzes the overall conversion of pyruvate to acetyl-CoA and CO(2). It contains multiple copies of three enzymatic components: pyruvate dehydrogenase (E1), dihydrolipoamide acetyltransferase (E2) and lipoamide dehydrogenase (E3). In Arabidopsis thaliana (Mouse-ear cress), this protein is Dihydrolipoyllysine-residue acetyltransferase component 5 of pyruvate dehydrogenase complex, chloroplastic (EMB3003).